A 188-amino-acid chain; its full sequence is Cell division protein ZapC (188 aa).

The protein belongs to the ZapC family. In terms of assembly, interacts directly with FtsZ.

The protein resides in the cytoplasm. Its function is as follows. Contributes to the efficiency of the cell division process by stabilizing the polymeric form of the cell division protein FtsZ. Acts by promoting interactions between FtsZ protofilaments and suppressing the GTPase activity of FtsZ. The chain is Cell division protein ZapC from Psychromonas ingrahamii (strain DSM 17664 / CCUG 51855 / 37).